Here is a 314-residue protein sequence, read N- to C-terminus: GTPase Era (314 aa).

Residues 21–189 (KSGFVGIIGR…QNTLIEQLEP (169 aa)) enclose the Era-type G domain. The tract at residues 29 to 36 (GRPNVGKS) is G1. Position 29 to 36 (29 to 36 (GRPNVGKS)) interacts with GTP. Residues 55–59 (QTTRN) form a G2 region. The segment at 76 to 79 (DTPG) is G3. GTP is bound by residues 76 to 80 (DTPGI) and 138 to 141 (NKSD). The interval 138–141 (NKSD) is G4. Positions 168–170 (FSA) are G5. The KH type-2 domain maps to 212 to 296 (IREQILQLTR…FLKLFVKVEP (85 aa)).

Belongs to the TRAFAC class TrmE-Era-EngA-EngB-Septin-like GTPase superfamily. Era GTPase family. Monomer.

It is found in the cytoplasm. The protein localises to the cell inner membrane. Functionally, an essential GTPase that binds both GDP and GTP, with rapid nucleotide exchange. Plays a role in 16S rRNA processing and 30S ribosomal subunit biogenesis and possibly also in cell cycle regulation and energy metabolism. The sequence is that of GTPase Era from Crocosphaera subtropica (strain ATCC 51142 / BH68) (Cyanothece sp. (strain ATCC 51142)).